Consider the following 338-residue polypeptide: MGHTKRNKTGVLLMNLGTPDAPTTSAVRRYLAEFLSDPRVVEIPRLLWLLILHGIILRIRPAKSAALYKGIWTEAGSPLLAISERQQAKLQGYLDEQQLTDKNGQAVSVHLAMRYGSPSVQQTMLQMHQAGIDNLVVLPLYPQYAAPTTASAFDAIAKTLSQWRYLPSLHFIHTYHDNDDYISALFASIKADFDTNGMPERLLLSYHGMPERNLHLGDPYYCFCMKTTRLVIEKMQQQGLVFDSDFVVTSFQSRFGKAKWLQPYTDVTLEALASEGVRKIAVACPAFSADCLETLEEIEQENREVFIHAGGESFRYISALNDNDDHIVMMANLVKPYL.

Positions 207 and 293 each coordinate Fe cation.

Belongs to the ferrochelatase family.

The protein resides in the cytoplasm. The catalysed reaction is heme b + 2 H(+) = protoporphyrin IX + Fe(2+). It functions in the pathway porphyrin-containing compound metabolism; protoheme biosynthesis; protoheme from protoporphyrin-IX: step 1/1. Catalyzes the ferrous insertion into protoporphyrin IX. The protein is Ferrochelatase of Shewanella denitrificans (strain OS217 / ATCC BAA-1090 / DSM 15013).